The primary structure comprises 526 residues: Lysine--tRNA ligase (526 aa).

The 'HIGH' region signature appears at 44–52 (PSGLPHIGT). The short motif at 290-294 (KISKS) is the 'KMSKS' region element. Lys293 provides a ligand contact to ATP.

It belongs to the class-I aminoacyl-tRNA synthetase family.

The protein localises to the cytoplasm. It carries out the reaction tRNA(Lys) + L-lysine + ATP = L-lysyl-tRNA(Lys) + AMP + diphosphate. The chain is Lysine--tRNA ligase from Rickettsia typhi (strain ATCC VR-144 / Wilmington).